We begin with the raw amino-acid sequence, 120 residues long: Large ribosomal subunit protein uL18 (120 aa).

This sequence belongs to the universal ribosomal protein uL18 family. In terms of assembly, part of the 50S ribosomal subunit; part of the 5S rRNA/L5/L18/L25 subcomplex. Contacts the 5S and 23S rRNAs.

Its function is as follows. This is one of the proteins that bind and probably mediate the attachment of the 5S RNA into the large ribosomal subunit, where it forms part of the central protuberance. This is Large ribosomal subunit protein uL18 from Acidiphilium cryptum (strain JF-5).